A 62-amino-acid polypeptide reads, in one-letter code: Large ribosomal subunit protein eL24 (62 aa).

Zn(2+) contacts are provided by C6, C9, C32, and C36. A C4-type zinc finger spans residues 6-36; that stretch reads CSFCGELLEPGTGLLFAKRDGSTYYFCSSKC.

Belongs to the eukaryotic ribosomal protein eL24 family. As to quaternary structure, part of the 50S ribosomal subunit. Forms a cluster with proteins L3 and L14. Requires Zn(2+) as cofactor.

In terms of biological role, binds to the 23S rRNA. The protein is Large ribosomal subunit protein eL24 of Methanococcoides burtonii (strain DSM 6242 / NBRC 107633 / OCM 468 / ACE-M).